We begin with the raw amino-acid sequence, 318 residues long: MKAFTYERVNTPAEAALSAQRVPGAKFIAGGTNLLDLMKLEIETPTHLIDVNGLGLDKIEVTDAGGLRIGALVRNTDLAAHERVRRDYAVLSRALLAGASGQLRNQATTAGNLLQRTRCPYFYDTNQPCNKRLPGSGCAALEGFSRQHAVVGVSEACIATHPSDMAVAMRLLDAVVETITPEGKTRSITLADFYHPPGKTPHIETALLPGELIVAVTLPPPLGGKHIYRKVRDRASYAFALVSVAAIIQPDGSGRVALGGVAHKPWRIEAADAQLSQGAQAVYDTLFASAHPTAENTFKLLLAKRTLASVLAEARAQA.

One can recognise an FAD-binding PCMH-type domain in the interval 1–223; the sequence is MKAFTYERVN…VAVTLPPPLG (223 aa). FAD contacts are provided by residues 26 to 34 and Thr-108; that span reads KFIAGGTNL. [4Fe-4S] cluster-binding residues include Cys-119, Cys-129, Cys-138, and Cys-157. Residues Asp-164, Ile-213, and Lys-230 each contribute to the FAD site.

As to quaternary structure, heterotrimer composed of PaoA, PaoB and PaoC. FAD serves as cofactor. It depends on [4Fe-4S] cluster as a cofactor.

It is found in the periplasm. It catalyses the reaction an aldehyde + A + H2O = a carboxylate + AH2 + H(+). The complex requires PaoD for activity. In terms of biological role, oxidizes aldehydes to the corresponding carboxylic acids with a preference for aromatic aldehydes. It might play a role in the detoxification of aldehydes to avoid cell damage. In Escherichia coli (strain K12), this protein is Aldehyde oxidoreductase FAD-binding subunit PaoB.